Here is a 268-residue protein sequence, read N- to C-terminus: Fibroblast growth factor 8 (268 aa).

An N-terminal signal peptide occupies residues 1–22 (MGSPRSALSCLLLHLLVLCLQA). The residue at position 23 (Gln23) is a Pyrrolidone carboxylic acid. Positions 29 to 87 (QKRGPGAGNPADTLGQGHEDRPFGQRSRAGKNFTNPAPNYPEEGSKEQRDSVLPKVTQR) are disordered. N-linked (GlcNAc...) asparagine glycosylation is present at Asn60. The segment covering 71 to 80 (EGSKEQRDSV) has biased composition (basic and acidic residues). The N-linked (GlcNAc...) asparagine glycan is linked to Asn190.

Belongs to the heparin-binding growth factors family. As to quaternary structure, monomer. Homodimer. Interacts with FGFR1, FGFR2, FGFR3 and FGFR4. Affinity between fibroblast growth factors (FGFs) and their receptors is increased by heparan sulfate glycosaminoglycans that function as coreceptors. The N-terminus is blocked. As to expression, absent in normal mammary glands and detected only in adult testis and ovary and in midgestational embryos.

The protein resides in the secreted. Functionally, plays an important role in the regulation of embryonic development, cell proliferation, cell differentiation and cell migration. Required for normal brain, eye, ear and limb development during embryogenesis. Required for normal development of the gonadotropin-releasing hormone (GnRH) neuronal system. Plays a role in neurite outgrowth in hippocampal cells. Cooperates with Wnt-1 in mouse mammary tumor virus-induced murine mammary tumorigenesis. This Mus musculus (Mouse) protein is Fibroblast growth factor 8 (Fgf8).